The primary structure comprises 299 residues: Protease HtpX homolog (299 aa).

The next 2 helical transmembrane spans lie at 19-39 and 41-61; these read LFIV…VWYF and WGLT…WIAY. Residue histidine 146 coordinates Zn(2+). Residue glutamate 147 is part of the active site. A Zn(2+)-binding site is contributed by histidine 150. Transmembrane regions (helical) follow at residues 156–176 and 198–218; these read ILLM…RDVM and IILL…VLII. Residue glutamate 227 participates in Zn(2+) binding.

Belongs to the peptidase M48B family. Zn(2+) is required as a cofactor.

The protein resides in the cell membrane. This chain is Protease HtpX homolog, found in Thermoanaerobacter pseudethanolicus (strain ATCC 33223 / 39E) (Clostridium thermohydrosulfuricum).